Consider the following 950-residue polypeptide: Inactive atromentin synthetase invA4 (950 aa).

The tract at residues 37–460 (SRAVSQYPNH…SGRIKDTVVV (424 aa)) is adenylation (A) domain. Residues 592–670 (APSTETEKTL…TLAKYVDSLV (79 aa)) form the Carrier domain. The tract at residues 597–667 (TEKTLAGIYA…EIITLAKYVD (71 aa)) is thiolation and peptide carrier (T) domain. O-(pantetheine 4'-phosphoryl)serine is present on serine 629. Residues 693–797 (PIFMVHPGIG…GIIDMIPHHM (105 aa)) are thioesterase (TE) domain.

This sequence belongs to the ATP-dependent AMP-binding enzyme family.

In terms of biological role, inactive atromentin synthetase homolog. Does not accept 4-hydroxyphenylpyruvate (4-HPP) as substrate. The protein is Inactive atromentin synthetase invA4 (invA4) of Paxillus involutus (Naked brimcap).